An 891-amino-acid polypeptide reads, in one-letter code: Alanine--tRNA ligase (891 aa).

Zn(2+) contacts are provided by His576, His580, Cys684, and His688.

It belongs to the class-II aminoacyl-tRNA synthetase family. It depends on Zn(2+) as a cofactor.

Its subcellular location is the cytoplasm. The catalysed reaction is tRNA(Ala) + L-alanine + ATP = L-alanyl-tRNA(Ala) + AMP + diphosphate. In terms of biological role, catalyzes the attachment of alanine to tRNA(Ala) in a two-step reaction: alanine is first activated by ATP to form Ala-AMP and then transferred to the acceptor end of tRNA(Ala). Also edits incorrectly charged Ser-tRNA(Ala) and Gly-tRNA(Ala) via its editing domain. The polypeptide is Alanine--tRNA ligase (Orientia tsutsugamushi (strain Boryong) (Rickettsia tsutsugamushi)).